A 251-amino-acid chain; its full sequence is 1-(5-phosphoribosyl)-5-[(5-phosphoribosylamino)methylideneamino] imidazole-4-carboxamide isomerase (251 aa).

The active-site Proton acceptor is the aspartate 8. Aspartate 131 acts as the Proton donor in catalysis.

This sequence belongs to the HisA/HisF family.

The protein localises to the cytoplasm. It catalyses the reaction 1-(5-phospho-beta-D-ribosyl)-5-[(5-phospho-beta-D-ribosylamino)methylideneamino]imidazole-4-carboxamide = 5-[(5-phospho-1-deoxy-D-ribulos-1-ylimino)methylamino]-1-(5-phospho-beta-D-ribosyl)imidazole-4-carboxamide. Its pathway is amino-acid biosynthesis; L-histidine biosynthesis; L-histidine from 5-phospho-alpha-D-ribose 1-diphosphate: step 4/9. The sequence is that of 1-(5-phosphoribosyl)-5-[(5-phosphoribosylamino)methylideneamino] imidazole-4-carboxamide isomerase from Thiobacillus denitrificans (strain ATCC 25259 / T1).